A 104-amino-acid polypeptide reads, in one-letter code: Large ribosomal subunit protein uL24 (104 aa).

This sequence belongs to the universal ribosomal protein uL24 family. In terms of assembly, part of the 50S ribosomal subunit.

One of two assembly initiator proteins, it binds directly to the 5'-end of the 23S rRNA, where it nucleates assembly of the 50S subunit. Its function is as follows. One of the proteins that surrounds the polypeptide exit tunnel on the outside of the subunit. The protein is Large ribosomal subunit protein uL24 of Shigella flexneri.